The sequence spans 812 residues: Eukaryotic translation initiation factor 3 subunit C (812 aa).

Residues 1-105 form a disordered region; that stretch reads MSRFFSRGYH…SDESDDEGKK (105 aa). 2 stretches are compositionally biased toward acidic residues: residues 17-40 and 48-59; these read SEDE…EVVS and SESESAESDDDS. A PCI domain is found at 607–783; it reads FHQHINLDLI…EMLIFDKGDE (177 aa).

This sequence belongs to the eIF-3 subunit C family. As to quaternary structure, component of the eukaryotic translation initiation factor 3 (eIF-3) complex.

The protein localises to the cytoplasm. Functionally, component of the eukaryotic translation initiation factor 3 (eIF-3) complex, which is involved in protein synthesis of a specialized repertoire of mRNAs and, together with other initiation factors, stimulates binding of mRNA and methionyl-tRNAi to the 40S ribosome. The eIF-3 complex specifically targets and initiates translation of a subset of mRNAs involved in cell proliferation. This is Eukaryotic translation initiation factor 3 subunit C from Eremothecium gossypii (strain ATCC 10895 / CBS 109.51 / FGSC 9923 / NRRL Y-1056) (Yeast).